We begin with the raw amino-acid sequence, 174 residues long: Large ribosomal subunit protein uL10 (174 aa).

The protein belongs to the universal ribosomal protein uL10 family. In terms of assembly, part of the ribosomal stalk of the 50S ribosomal subunit. The N-terminus interacts with L11 and the large rRNA to form the base of the stalk. The C-terminus forms an elongated spine to which L12 dimers bind in a sequential fashion forming a multimeric L10(L12)X complex.

Forms part of the ribosomal stalk, playing a central role in the interaction of the ribosome with GTP-bound translation factors. This Vesicomyosocius okutanii subsp. Calyptogena okutanii (strain HA) protein is Large ribosomal subunit protein uL10.